The primary structure comprises 145 residues: Large ribosomal subunit protein uL15 (145 aa).

Residues M1 to L58 form a disordered region. Positions R19–Q33 are enriched in gly residues.

Belongs to the universal ribosomal protein uL15 family. As to quaternary structure, part of the 50S ribosomal subunit.

Its function is as follows. Binds to the 23S rRNA. The protein is Large ribosomal subunit protein uL15 of Borrelia garinii subsp. bavariensis (strain ATCC BAA-2496 / DSM 23469 / PBi) (Borreliella bavariensis).